The sequence spans 748 residues: Putative pre-mRNA-splicing factor ATP-dependent RNA helicase DHX32 (748 aa).

In terms of domain architecture, Helicase ATP-binding spans 74 to 240 (LEHLAHNQIV…YGNAPLVEAE (167 aa)). Residue 87 to 94 (AGPKSGKS) participates in ATP binding. Residues 263–439 (RLLFEIHHTK…SMVLFLKRMD (177 aa)) enclose the Helicase C-terminal domain. The tract at residues 706 to 748 (SETKDLLQQDQTPDTPPTEEPREEEPLHEANDEGTAEQRCIIQ) is disordered.

Belongs to the DEAD box helicase family. DEAH subfamily.

It localises to the nucleus. The protein resides in the mitochondrion. The enzyme catalyses ATP + H2O = ADP + phosphate + H(+). In Xenopus laevis (African clawed frog), this protein is Putative pre-mRNA-splicing factor ATP-dependent RNA helicase DHX32 (dhx32).